Here is a 315-residue protein sequence, read N- to C-terminus: Thioredoxin reductase (315 aa).

45–52 (EGSTPGGK) serves as a coordination point for FAD. Cysteines 145 and 148 form a disulfide. 288–297 (DCRSKHFRQI) is an FAD binding site.

This sequence belongs to the class-II pyridine nucleotide-disulfide oxidoreductase family. As to quaternary structure, homodimer. Requires FAD as cofactor.

The protein localises to the cytoplasm. It catalyses the reaction [thioredoxin]-dithiol + NADP(+) = [thioredoxin]-disulfide + NADPH + H(+). The protein is Thioredoxin reductase (trxB) of Mycoplasma pneumoniae (strain ATCC 29342 / M129 / Subtype 1) (Mycoplasmoides pneumoniae).